Here is a 486-residue protein sequence, read N- to C-terminus: Bile acid receptor (486 aa).

A Glycyl lysine isopeptide (Lys-Gly) (interchain with G-Cter in SUMO1) cross-link involves residue Lys132. Positions 134 to 209 form a DNA-binding region, nuclear receptor; that stretch reads DELCVVCGDR…MGMLAECMYT (76 aa). The NR C4-type zinc finger occupies 137 to 157; it reads CVVCGDRASGYHYNALTCEGC. Phosphoserine; by PKC/PRKCA occurs at positions 145 and 164. Lys167 carries the post-translational modification N6-acetyllysine; by EP300. The NR C4-type zinc finger occupies 173 to 197; sequence CKNGGNCVMDMYMRRKCQECRLRKC. Position 220 is an N6-methyllysine; by SETD7 (Lys220). Lys227 carries the post-translational modification N6-acetyllysine; by EP300. An NR LBD domain is found at 262–486; that stretch reads DQQTLLHFIM…PLLCEIWDVQ (225 aa). Lys289 participates in a covalent cross-link: Glycyl lysine isopeptide (Lys-Gly) (interchain with G-Cter in SUMO1). 3 residues coordinate chenodeoxycholate: Arg345, Tyr375, and Tyr383. Thr456 carries the phosphothreonine; by PKC/PRKCZ modification. His461 provides a ligand contact to chenodeoxycholate.

It belongs to the nuclear hormone receptor family. NR1 subfamily. Heterodimer (via C-terminus) with RXRA (via DBD); the heterodimerization enhances the binding affinity for LXXLL motifs from coactivators. Binds DNA predominantly as a heterodimer with RXRA. After activation by agonist binding interacts with coactivators. Interacts with NCOA1, NCOA2, PPARGC1A, CARM1, SETD7, PRMT1, GPS2, SMARCA4 and MED1. Interacts with EP300 and SMARCD1. Interacts with XRCC5 and XRCC6; decreasing NR1H4/FXR transactivation activity towards ABCB11/BSEP. Interacts with PAGR1 and NCOA6; indicative for an association with an MLL2/MLL3 complex (ASCOM). Post-translationally, acetylated by EP300. Lys-227 as is the major acetylation site for EP300; the dynamicly regulated acetylation inhibits heterodimerization with RXRA and transactivation activity. Deacetylated by SIRT1. Methylation may increase transactivation of target genes. In terms of processing, phosphorylation by PKC/PRKCA increases transactivation activity by promoting association with PPARGC1A. Post-translationally, sumoylated upon ligand binding. Liver and hepatocyte-related cells express mainly FXRalpha1-type isoforms with isoform 3 and isoform 4 in approximately equal proportions. In intestine and kidney mainly FXRalpha2-type isoforms are expressed with isoform 1 and isoform 2 in approximately equal proportions. Expressed in pancreatic beta cells and macrophages.

It is found in the nucleus. Its function is as follows. Ligand-activated transcription factor. Receptor for bile acids (BAs) such as chenodeoxycholic acid (CDCA), lithocholic acid, deoxycholic acid (DCA) and allocholic acid (ACA). Plays a essential role in BA homeostasis through the regulation of genes involved in BA synthesis, conjugation and enterohepatic circulation. Also regulates lipid and glucose homeostasis and is involved innate immune response. The FXR-RXR heterodimer binds predominantly to farnesoid X receptor response elements (FXREs) containing two inverted repeats of the consensus sequence 5'-AGGTCA-3' in which the monomers are spaced by 1 nucleotide (IR-1) but also to tandem repeat DR1 sites with lower affinity, and can be activated by either FXR or RXR-specific ligands. It is proposed that monomeric nuclear receptors such as NR5A2/LRH-1 bound to coregulatory nuclear responsive element (NRE) halfsites located in close proximity to FXREs modulate transcriptional activity. In the liver activates transcription of the corepressor NR0B2 thereby indirectly inhibiting CYP7A1 and CYP8B1 (involved in BA synthesis) implicating at least in part histone demethylase KDM1A resulting in epigenomic repression, and SLC10A1/NTCP (involved in hepatic uptake of conjugated BAs). Activates transcription of the repressor MAFG (involved in regulation of BA synthesis). Activates transcription of SLC27A5/BACS and BAAT (involved in BA conjugation), ABCB11/BSEP (involved in bile salt export) by directly recruiting histone methyltransferase CARM1, and ABCC2/MRP2 (involved in secretion of conjugated BAs) and ABCB4 (involved in secretion of phosphatidylcholine in the small intestine). Activates transcription of SLC27A5/BACS and BAAT (involved in BA conjugation), ABCB11/BSEP (involved in bile salt export) by directly recruiting histone methyltransferase CARM1, and ABCC2/MRP2 (involved in secretion of conjugated BAs) and ABCB4 (involved in secretion of phosphatidylcholine in the small intestine). In the intestine activates FGF19 expression and secretion leading to hepatic CYP7A1 repression. The function also involves the coordinated induction of hepatic KLB/beta-klotho expression. Regulates transcription of liver UGT2B4 and SULT2A1 involved in BA detoxification; binding to the UGT2B4 promoter seems to imply a monomeric transactivation independent of RXRA. Modulates lipid homeostasis by activating liver NR0B2/SHP-mediated repression of SREBF1 (involved in de novo lipogenesis), expression of PLTP (involved in HDL formation), SCARB1 (involved in HDL hepatic uptake), APOE, APOC1, APOC4, PPARA (involved in beta-oxidation of fatty acids), VLDLR and SDC1 (involved in the hepatic uptake of LDL and IDL remnants), and inhibiting expression of MTTP (involved in VLDL assembly. Increases expression of APOC2 (promoting lipoprotein lipase activity implicated in triglyceride clearance). Transrepresses APOA1 involving a monomeric competition with NR2A1 for binding to a DR1 element. Also reduces triglyceride clearance by inhibiting expression of ANGPTL3 and APOC3 (both involved in inhibition of lipoprotein lipase). Involved in glucose homeostasis by modulating hepatic gluconeogenesis through activation of NR0B2/SHP-mediated repression of respective genes. Modulates glycogen synthesis (inducing phosphorylation of glycogen synthase kinase-3). Modulates glucose-stimulated insulin secretion and is involved in insulin resistance. Involved in intestinal innate immunity. Plays a role in protecting the distal small intestine against bacterial overgrowth and preservation of the epithelial barrier. Down-regulates inflammatory cytokine expression in several types of immune cells including macrophages and mononuclear cells. Mediates trans-repression of TLR4-induced cytokine expression; the function seems to require its sumoylation and prevents N-CoR nuclear receptor corepressor clearance from target genes such as IL1B and NOS2. Involved in the TLR9-mediated protective mechanism in intestinal inflammation. Plays an anti-inflammatory role in liver inflammation; proposed to inhibit pro-inflammatory (but not antiapoptotic) NF-kappa-B signaling). In terms of biological role, promotes transcriptional activation of target genes NR0B2/SHP (inducible by unconjugated CDCA), SLC51B/OSTB (inducible by unconjugated CDCA and DCA) and FABP6/IBAP; low activity for ABCB11/BSEP (inducible by unconjugated CDCA, DCA and ACA); not inducible by taurine- and glycine-amidated CDCA. Functionally, promotes transcriptional activation of target genes ABCB11/BSEP (inducible by unconjugated CDCA, DCA and ACA), NR0B2/SHP (inducible by unconjugated CDCA DCA and ACA), SLC51B/OSTB (inducible by unconjugated CDCA and DCA) and FABP6/IBAP; not inducible by taurine- and glycine-amidated CDCA. Promotes transcriptional activation of target genes NR0B2/SHP (inducible by unconjugated CDCA), SLC51B/OSTB (inducible by unconjugated CDCA and DCA) and IBAP; low activity for ABCB11/BSEP (inducible by unconjugated CDCA, DCA and ACA); not inducible by taurine- and glycine-amidated CDCA. Its function is as follows. Promotes transcriptional activation of target genes ABCB11/BSEP (inducible by unconjugated CDCA, ACA and DCA), NR0B2/SHP (inducible by unconjugated CDCA, ACA and DCA), SLC51B/OSTB (inducible by unconjugated CDCA and DCA) and FABP6/IBAP; most efficient isoform compared to isoforms 1 to 3; not inducible by taurine- and glycine-amidated CDCA. This is Bile acid receptor (NR1H4) from Homo sapiens (Human).